Reading from the N-terminus, the 448-residue chain is Exodeoxyribonuclease 7 large subunit (448 aa).

The protein belongs to the XseA family. As to quaternary structure, heterooligomer composed of large and small subunits.

The protein resides in the cytoplasm. It carries out the reaction Exonucleolytic cleavage in either 5'- to 3'- or 3'- to 5'-direction to yield nucleoside 5'-phosphates.. Its function is as follows. Bidirectionally degrades single-stranded DNA into large acid-insoluble oligonucleotides, which are then degraded further into small acid-soluble oligonucleotides. The protein is Exodeoxyribonuclease 7 large subunit of Shewanella baltica (strain OS195).